The chain runs to 283 residues: (+)-O-methylkolavelool synthase (283 aa).

S-adenosyl-L-methionine contacts are provided by residues Gln106, Asn129–Ala130, and His151.

It belongs to the methyltransferase superfamily.

The enzyme catalyses (+)-kolavelool + S-adenosyl-L-methionine = (+)-O-methylkolavelool + S-adenosyl-L-homocysteine + H(+). Involved in the biosynthesis of the diterpene (+)-O-methylkolavelool. Catalyzes the transfer of a methyl group from S-adenosyl-L-methionine to the hydroxy group of (+)-kolavelool, forming (+)-O-methylkolavelool. The sequence is that of (+)-O-methylkolavelool synthase from Herpetosiphon aurantiacus (strain ATCC 23779 / DSM 785 / 114-95).